A 303-amino-acid polypeptide reads, in one-letter code: Phospholipase A1 2 (303 aa).

An intrachain disulfide couples Cys6 to Cys90. Ser140 acts as the Nucleophile in catalysis. Asp168 serves as the catalytic Charge relay system. An intrachain disulfide couples Cys179 to Cys184. His232 acts as the Charge relay system in catalysis. 3 disulfides stabilise this stretch: Cys247/Cys271, Cys248/Cys296, and Cys264/Cys269.

It belongs to the AB hydrolase superfamily. Lipase family. Expressed by the venom gland.

The protein resides in the secreted. It catalyses the reaction a 1,2-diacyl-sn-glycero-3-phosphocholine + H2O = a 2-acyl-sn-glycero-3-phosphocholine + a fatty acid + H(+). Its function is as follows. Catalyzes the hydrolysis of phosphatidylcholine with phospholipase A1 activity. May act as an allergen and induce hemolytic activity. This chain is Phospholipase A1 2, found in Dolichovespula maculata (Bald-faced hornet).